The chain runs to 319 residues: Extracellular phospholipase A1 (319 aa).

A signal peptide spans 1 to 24 (MSMPLSFTSAVSPVAAIPTPRAAA).

The enzyme catalyses a 1,2-diacyl-sn-glycero-3-phosphocholine + H2O = a 2-acyl-sn-glycero-3-phosphocholine + a fatty acid + H(+). The sequence is that of Extracellular phospholipase A1 (phlA) from Serratia liquefaciens.